The chain runs to 150 residues: Large ribosomal subunit protein bL9 (150 aa).

It belongs to the bacterial ribosomal protein bL9 family.

Its function is as follows. Binds to the 23S rRNA. The protein is Large ribosomal subunit protein bL9 of Buchnera aphidicola subsp. Schizaphis graminum (strain Sg).